The primary structure comprises 255 residues: Probable transcriptional regulator ycf27 (255 aa).

Residues 9–122 enclose the Response regulatory domain; that stretch reads KILIADDESS…ELEARIRCVL (114 aa). Aspartate 58 carries the 4-aspartylphosphate modification. The segment at residues 78–96 is a DNA-binding region (H-T-H motif); that stretch reads DIPIIMLTALGDVTDRITG. The segment at residues 137–238 is a DNA-binding region (ompR/PhoB-type); it reads SGIINIGFLK…SRGTGYLFQR (102 aa).

It is found in the plastid. The protein localises to the chloroplast. Probable promoter-specific protein mediating the interaction between DNA and RNA polymerase. This chain is Probable transcriptional regulator ycf27 (ycf27), found in Galdieria sulphuraria (Red alga).